The primary structure comprises 166 residues: CDP-archaeol synthase (166 aa).

The next 4 helical transmembrane spans lie at 42-62 (LVLG…VQDA), 73-93 (VLSV…KSFV), 103-123 (AAWP…LLLI), and 128-148 (FAAV…TPLL).

Belongs to the CDP-archaeol synthase family. It depends on Mg(2+) as a cofactor.

The protein localises to the cell membrane. It catalyses the reaction 2,3-bis-O-(geranylgeranyl)-sn-glycerol 1-phosphate + CTP + H(+) = CDP-2,3-bis-O-(geranylgeranyl)-sn-glycerol + diphosphate. It participates in membrane lipid metabolism; glycerophospholipid metabolism. In terms of biological role, catalyzes the formation of CDP-2,3-bis-(O-geranylgeranyl)-sn-glycerol (CDP-archaeol) from 2,3-bis-(O-geranylgeranyl)-sn-glycerol 1-phosphate (DGGGP) and CTP. This reaction is the third ether-bond-formation step in the biosynthesis of archaeal membrane lipids. The sequence is that of CDP-archaeol synthase from Methanosphaerula palustris (strain ATCC BAA-1556 / DSM 19958 / E1-9c).